Consider the following 174-residue polypeptide: ATP-dependent protease subunit HslV (174 aa).

The active site involves Thr-2. 3 residues coordinate Na(+): Gly-157, Asp-160, and Thr-163.

It belongs to the peptidase T1B family. HslV subfamily. As to quaternary structure, a double ring-shaped homohexamer of HslV is capped on each side by a ring-shaped HslU homohexamer. The assembly of the HslU/HslV complex is dependent on binding of ATP.

The protein resides in the cytoplasm. The enzyme catalyses ATP-dependent cleavage of peptide bonds with broad specificity.. With respect to regulation, allosterically activated by HslU binding. Protease subunit of a proteasome-like degradation complex believed to be a general protein degrading machinery. In Aliivibrio fischeri (strain MJ11) (Vibrio fischeri), this protein is ATP-dependent protease subunit HslV.